Consider the following 121-residue polypeptide: Small ribosomal subunit protein uS13 (121 aa).

The tract at residues 91–121 (HRRGLPVRGQKTKNNARTRKGPVKTVANKKK) is disordered.

This sequence belongs to the universal ribosomal protein uS13 family. As to quaternary structure, part of the 30S ribosomal subunit. Forms a loose heterodimer with protein S19. Forms two bridges to the 50S subunit in the 70S ribosome.

Located at the top of the head of the 30S subunit, it contacts several helices of the 16S rRNA. In the 70S ribosome it contacts the 23S rRNA (bridge B1a) and protein L5 of the 50S subunit (bridge B1b), connecting the 2 subunits; these bridges are implicated in subunit movement. Contacts the tRNAs in the A and P-sites. The protein is Small ribosomal subunit protein uS13 of Staphylococcus carnosus (strain TM300).